The primary structure comprises 423 residues: Glutamate-1-semialdehyde 2,1-aminomutase (423 aa).

An N6-(pyridoxal phosphate)lysine modification is found at K259.

It belongs to the class-III pyridoxal-phosphate-dependent aminotransferase family. HemL subfamily. As to quaternary structure, homodimer. It depends on pyridoxal 5'-phosphate as a cofactor.

The protein localises to the cytoplasm. The enzyme catalyses (S)-4-amino-5-oxopentanoate = 5-aminolevulinate. It participates in porphyrin-containing compound metabolism; protoporphyrin-IX biosynthesis; 5-aminolevulinate from L-glutamyl-tRNA(Glu): step 2/2. This is Glutamate-1-semialdehyde 2,1-aminomutase from Thermosipho africanus (strain TCF52B).